A 257-amino-acid polypeptide reads, in one-letter code: Phosphonates import ATP-binding protein PhnC 1 (257 aa).

An ABC transporter domain is found at 2–246 (IELKNVSKVY…VFKDIYGRPL (245 aa)). 35-42 (GLSGAGKS) provides a ligand contact to ATP.

This sequence belongs to the ABC transporter superfamily. Phosphonates importer (TC 3.A.1.9.1) family. The complex is composed of two ATP-binding proteins (PhnC), two transmembrane proteins (PhnE) and a solute-binding protein (PhnD).

It is found in the cell membrane. It catalyses the reaction phosphonate(out) + ATP + H2O = phosphonate(in) + ADP + phosphate + H(+). Its function is as follows. Part of the ABC transporter complex PhnCDE involved in phosphonates import. Responsible for energy coupling to the transport system. This Halalkalibacterium halodurans (strain ATCC BAA-125 / DSM 18197 / FERM 7344 / JCM 9153 / C-125) (Bacillus halodurans) protein is Phosphonates import ATP-binding protein PhnC 1.